The chain runs to 176 residues: Large ribosomal subunit protein uL6 (176 aa).

It belongs to the universal ribosomal protein uL6 family. As to quaternary structure, part of the 50S ribosomal subunit.

Its function is as follows. This protein binds to the 23S rRNA, and is important in its secondary structure. It is located near the subunit interface in the base of the L7/L12 stalk, and near the tRNA binding site of the peptidyltransferase center. The polypeptide is Large ribosomal subunit protein uL6 (Lactobacillus helveticus (strain DPC 4571)).